The following is a 246-amino-acid chain: Hydroxyacylglutathione hydrolase (246 aa).

Zn(2+)-binding residues include His-58, His-60, Asp-62, His-63, His-117, Asp-137, and His-175.

It belongs to the metallo-beta-lactamase superfamily. Glyoxalase II family. In terms of assembly, monomer. Requires Zn(2+) as cofactor.

It catalyses the reaction an S-(2-hydroxyacyl)glutathione + H2O = a 2-hydroxy carboxylate + glutathione + H(+). It participates in secondary metabolite metabolism; methylglyoxal degradation; (R)-lactate from methylglyoxal: step 2/2. Thiolesterase that catalyzes the hydrolysis of S-D-lactoyl-glutathione to form glutathione and D-lactic acid. The polypeptide is Hydroxyacylglutathione hydrolase (Prochlorococcus marinus (strain MIT 9312)).